A 61-amino-acid chain; its full sequence is Small ribosomal subunit protein uS14 (61 aa).

Residues Cys-24, Cys-27, Cys-40, and Cys-43 each coordinate Zn(2+).

This sequence belongs to the universal ribosomal protein uS14 family. Zinc-binding uS14 subfamily. In terms of assembly, part of the 30S ribosomal subunit. Contacts proteins S3 and S10. Zn(2+) is required as a cofactor.

Functionally, binds 16S rRNA, required for the assembly of 30S particles and may also be responsible for determining the conformation of the 16S rRNA at the A site. The chain is Small ribosomal subunit protein uS14 from Symbiobacterium thermophilum (strain DSM 24528 / JCM 14929 / IAM 14863 / T).